A 612-amino-acid chain; its full sequence is uncharacterized protein (612 aa).

6 helical membrane passes run 13–33, 38–58, 67–87, 107–127, 144–164, and 189–209; these read IPLT…EWLP, AILV…EGIA, TIMA…IQII, GFIV…AIFL, LLIP…LGTS, and LGLL…PILL. 2 consecutive RCK C-terminal domains span residues 218–302 and 316–403; these read GNVA…ERGI and NNAG…LLVL. A run of 6 helical transmembrane segments spans residues 419–439, 459–479, 501–521, 525–545, 546–566, and 586–606; these read AIAI…PISV, IYGA…PLGT, LSGY…TEIL, ATVV…GLNP, LAFM…PIGY, and IGAP…MLIY.

Belongs to the SLC13A/DASS transporter (TC 2.A.47) family. NADC subfamily.

It is found in the cell membrane. This is an uncharacterized protein from Synechocystis sp. (strain ATCC 27184 / PCC 6803 / Kazusa).